A 165-amino-acid polypeptide reads, in one-letter code: Endoribonuclease YbeY (165 aa).

3 residues coordinate Zn(2+): H131, H135, and H141.

The protein belongs to the endoribonuclease YbeY family. Requires Zn(2+) as cofactor.

It is found in the cytoplasm. Functionally, single strand-specific metallo-endoribonuclease involved in late-stage 70S ribosome quality control and in maturation of the 3' terminus of the 16S rRNA. In Agathobacter rectalis (strain ATCC 33656 / DSM 3377 / JCM 17463 / KCTC 5835 / VPI 0990) (Eubacterium rectale), this protein is Endoribonuclease YbeY.